The chain runs to 881 residues: Sodium/sulfate cotransporter 1 (881 aa).

6 helical membrane-spanning segments follow: residues 8-28 (GIVA…DWVG), 31-51 (ITFT…VTVA), 61-81 (GLLT…TGGL), 107-127 (MVLS…PILI), 140-160 (LLIP…IGTS), and 186-206 (IFDI…FILL). 4 RCK C-terminal domains span residues 212 to 296 (LPGN…EYGL), 318 to 402 (VFSA…IKTN), 407 to 492 (LHAV…FPGL), and 498 to 584 (EQVD…DKSF). A run of 6 helical transmembrane segments spans residues 601-621 (MIIG…GGLK), 625-645 (YIHL…TGCM), 658-678 (VYLT…TGVA), 684-704 (AIIS…AIYI), 775-795 (FAIV…FILV), and 803-823 (VWIV…LYFL). Residues 854-881 (SLRRQVSHTRTDDSGSSGSPLPAPKIVA) are disordered.

The protein belongs to the divalent anion:Na+ symporter (DASS) superfamily. Na+/sulfate symporter (TC 2.A.47.4) family.

The protein localises to the cell membrane. Functionally, na(+)/sulfate cotransporter with a probable high-affinity for sulfate and a proteasome dependent turnover. The polypeptide is Sodium/sulfate cotransporter 1 (SLT1) (Chlamydomonas reinhardtii (Chlamydomonas smithii)).